Consider the following 1404-residue polypeptide: DNA-directed RNA polymerase subunit beta' (1404 aa).

Cys-70, Cys-72, Cys-85, and Cys-88 together coordinate Zn(2+). Residues Asp-460, Asp-462, and Asp-464 each coordinate Mg(2+). 4 residues coordinate Zn(2+): Cys-814, Cys-888, Cys-895, and Cys-898.

Belongs to the RNA polymerase beta' chain family. In terms of assembly, the RNAP catalytic core consists of 2 alpha, 1 beta, 1 beta' and 1 omega subunit. When a sigma factor is associated with the core the holoenzyme is formed, which can initiate transcription. The cofactor is Mg(2+). Zn(2+) is required as a cofactor.

The enzyme catalyses RNA(n) + a ribonucleoside 5'-triphosphate = RNA(n+1) + diphosphate. Functionally, DNA-dependent RNA polymerase catalyzes the transcription of DNA into RNA using the four ribonucleoside triphosphates as substrates. The polypeptide is DNA-directed RNA polymerase subunit beta' (Buchnera aphidicola subsp. Baizongia pistaciae (strain Bp)).